A 58-amino-acid chain; its full sequence is SPbeta prophage-derived uncharacterized protein YotN (58 aa).

This chain is SPbeta prophage-derived uncharacterized protein YotN (yotN), found in Bacillus subtilis (strain 168).